A 630-amino-acid chain; its full sequence is Plastin-1 (630 aa).

The segment at 1 to 114 (MENNVTTISR…LGGTSSISTE (114 aa)) is fimbrin headpiece. EF-hand domains follow at residues 11-46 (EELEELREAFNKIDIDNSGYVSDYELQDLFKEASLP) and 51-86 (KVREIIEKIFAVTDSNKDGKINFEEFVSLIQELKSK). Residues D24, D26, S28, Y30, E35, D64, N66, D68, K70, and E75 each coordinate Ca(2+). Actin-binding stretches follow at residues 108-375 (TSSI…LFNT) and 376-624 (YPAL…LMGR). The interval 115 to 630 (GTQHSYSEEE…LMGRGLNKIK (516 aa)) is fimbrin core. 4 consecutive Calponin-homology (CH) domains span residues 122–238 (EEEK…KVGL), 266–377 (LSPE…NTYP), 396–505 (SNEE…RRYT), and 517–626 (KVND…GRGL).

In terms of assembly, monomer. In terms of processing, the N-terminus is blocked.

The protein resides in the cytoplasm. The protein localises to the cell projection. Its subcellular location is the stereocilium. In terms of biological role, actin-bundling protein. In the inner ear, it is required for stereocilia formation. Mediates liquid packing of actin filaments that is necessary for stereocilia to grow to their proper dimensions. The protein is Plastin-1 (PLS1) of Gallus gallus (Chicken).